A 118-amino-acid polypeptide reads, in one-letter code: Large ribosomal subunit protein uL18 (118 aa).

The protein belongs to the universal ribosomal protein uL18 family. In terms of assembly, part of the 50S ribosomal subunit; part of the 5S rRNA/L5/L18/L25 subcomplex. Contacts the 5S and 23S rRNAs.

Its function is as follows. This is one of the proteins that bind and probably mediate the attachment of the 5S RNA into the large ribosomal subunit, where it forms part of the central protuberance. This chain is Large ribosomal subunit protein uL18, found in Wolinella succinogenes (strain ATCC 29543 / DSM 1740 / CCUG 13145 / JCM 31913 / LMG 7466 / NCTC 11488 / FDC 602W) (Vibrio succinogenes).